We begin with the raw amino-acid sequence, 210 residues long: Histone H1A (210 aa).

Disordered stretches follow at residues 1–49 (MAEA…VSEQ) and 101–210 (KGSG…PKKK). Composition is skewed to low complexity over residues 26–45 (KKAA…SGPS) and 129–142 (PLAA…AAAK). The region spanning 42–113 (SGPSVSEQIV…GASGSFKLNK (72 aa)) is the H15 domain. Basic residues-rich tracts occupy residues 143 to 153 (KTAKSPKKPKK) and 160 to 180 (SPKK…KTAV). Residues 181-192 (KPKVAAKSPAKA) are compositionally biased toward low complexity. Basic residues predominate over residues 193–210 (KAAKPKVAKAKKAAPKKK).

Belongs to the histone H1/H5 family.

It is found in the nucleus. The protein localises to the chromosome. Histones H1 are necessary for the condensation of nucleosome chains into higher-order structures. The sequence is that of Histone H1A from Xenopus laevis (African clawed frog).